The primary structure comprises 185 residues: Elongation factor P (185 aa).

This sequence belongs to the elongation factor P family.

It is found in the cytoplasm. It participates in protein biosynthesis; polypeptide chain elongation. Its function is as follows. Involved in peptide bond synthesis. Stimulates efficient translation and peptide-bond synthesis on native or reconstituted 70S ribosomes in vitro. Probably functions indirectly by altering the affinity of the ribosome for aminoacyl-tRNA, thus increasing their reactivity as acceptors for peptidyl transferase. This Endomicrobium trichonymphae protein is Elongation factor P.